A 113-amino-acid chain; its full sequence is Putative pterin-4-alpha-carbinolamine dehydratase (113 aa).

This sequence belongs to the pterin-4-alpha-carbinolamine dehydratase family.

The enzyme catalyses (4aS,6R)-4a-hydroxy-L-erythro-5,6,7,8-tetrahydrobiopterin = (6R)-L-erythro-6,7-dihydrobiopterin + H2O. In Bordetella bronchiseptica (strain ATCC BAA-588 / NCTC 13252 / RB50) (Alcaligenes bronchisepticus), this protein is Putative pterin-4-alpha-carbinolamine dehydratase.